We begin with the raw amino-acid sequence, 418 residues long: MAP kinase-interacting serine/threonine-protein kinase 1 (418 aa).

The segment at 1 to 23 (MVSSQPVPFDDGGKRRKKKRKTR) is disordered. The 285-residue stretch at 37-321 (RLTDELLGEG…AFQVLQHPWL (285 aa)) folds into the Protein kinase domain. ATP is bound by residues 43 to 51 (LGEGAYAKV) and Lys66. Asp158 acts as the Proton acceptor in catalysis. The segment at 384-418 (PPSKSRLAKRRAQAHARKGGSHPTHSTVTASQGTP) is disordered. Basic residues predominate over residues 389–403 (RLAKRRAQAHARKGG). Polar residues predominate over residues 406–418 (PTHSTVTASQGTP).

This sequence belongs to the protein kinase superfamily. CAMK Ser/Thr protein kinase family. Mg(2+) serves as cofactor.

The enzyme catalyses L-seryl-[protein] + ATP = O-phospho-L-seryl-[protein] + ADP + H(+). The catalysed reaction is L-threonyl-[protein] + ATP = O-phospho-L-threonyl-[protein] + ADP + H(+). In terms of biological role, may play a role in the response to environmental stress and cytokines. Appears to regulate translation by phosphorylating EIF4E, thus increasing the affinity of this protein for the 7-methylguanosine-containing mRNA cap. The polypeptide is MAP kinase-interacting serine/threonine-protein kinase 1 (mknk1) (Xenopus laevis (African clawed frog)).